Consider the following 270-residue polypeptide: Glutamate racemase (270 aa).

Substrate-binding positions include 13–14 and 45–46; these read DS and YG. The active-site Proton donor/acceptor is the cysteine 77. 78 to 79 is a binding site for substrate; that stretch reads NT. The active-site Proton donor/acceptor is cysteine 185. Residue 186 to 187 coordinates substrate; it reads TH.

This sequence belongs to the aspartate/glutamate racemases family.

The enzyme catalyses L-glutamate = D-glutamate. It participates in cell wall biogenesis; peptidoglycan biosynthesis. Its function is as follows. Provides the (R)-glutamate required for cell wall biosynthesis. The protein is Glutamate racemase of Vibrio parahaemolyticus serotype O3:K6 (strain RIMD 2210633).